A 413-amino-acid chain; its full sequence is Bestrophin homolog 13 (413 aa).

Helical transmembrane passes span 29–49, 72–92, 236–256, and 272–292; these read LIYL…IDLI, SYTR…NVVA, LVYT…TLFG, and LVVP…FKVG.

Belongs to the anion channel-forming bestrophin (TC 1.A.46) family. Calcium-sensitive chloride channel subfamily. Forms oligomers.

The protein resides in the cell membrane. Forms chloride channels. This is Bestrophin homolog 13 (best-13) from Caenorhabditis elegans.